We begin with the raw amino-acid sequence, 186 residues long: Signal peptidase I P (186 aa).

The Cytoplasmic segment spans residues 1–15 (MTKEKVFKKKSSILE). Residues 16–35 (WGKAIVIAVILALLIRNFLF) traverse the membrane as a helical segment. At 36–186 (EPYVVEGKSM…FPFSNMRKAK (151 aa)) the chain is on the extracellular side. Active-site residues include serine 44 and lysine 86.

It belongs to the peptidase S26 family.

Its subcellular location is the cell membrane. The catalysed reaction is Cleavage of hydrophobic, N-terminal signal or leader sequences from secreted and periplasmic proteins.. This is Signal peptidase I P (sipP) from Bacillus subtilis subsp. natto.